We begin with the raw amino-acid sequence, 45 residues long: Iota-conotoxin-like R11.10 (45 aa).

4 cysteine pairs are disulfide-bonded: Cys-5-Cys-19, Cys-12-Cys-22, Cys-18-Cys-27, and Cys-21-Cys-36. D-leucine is present on Leu-43. Residue Arg-45 is a propeptide, removed by a carboxypeptidase.

This sequence belongs to the conotoxin I1 superfamily. Expressed by the venom duct.

The protein localises to the secreted. Iota-conotoxins bind to voltage-gated sodium channels (Nav) and act as agonists by shifting the voltage-dependence of activation to more hyperpolarized levels. Produces general excitatory symptoms. The sequence is that of Iota-conotoxin-like R11.10 from Conus radiatus (Rayed cone).